We begin with the raw amino-acid sequence, 154 residues long: Large ribosomal subunit protein uL13 (154 aa).

It belongs to the universal ribosomal protein uL13 family. As to quaternary structure, part of the 50S ribosomal subunit.

Its function is as follows. This protein is one of the early assembly proteins of the 50S ribosomal subunit, although it is not seen to bind rRNA by itself. It is important during the early stages of 50S assembly. This chain is Large ribosomal subunit protein uL13, found in Rhizobium leguminosarum bv. trifolii (strain WSM2304).